The sequence spans 367 residues: MTYTGSIRCEGDTWDLASSVGATATMVAAARAMATRAANPLINDQFAEPLVRAVGVDVLTRLASGELTASDIDDPERPNASMVRMAEHHAVRTKFFDEFFMDATRAGIRQVVILASGLDSRAYRLAWPAQTVVYEIDQPQVMEFKTRTLAELGATPTADRRVVTADLRADWPTALGAAGFDPTQPTAWSAEGLLRYLPPEAQDRLLDNVTALSVPDSRFATESIRNFKPHHEERMRERMTILANRWRAYGFDLDMNELVYFGDRNEPASYLSDNGWLLTEIKSQDLLTANGFQPFEDEEVPLPDFFYVSARLQRKHRQYPAHRKPAPSWRHTACPVNELSKSAAYTMTRSDAHQASTTAPPPPGLTG.

Residues Asp-137 and 166–167 (DL) contribute to the S-adenosyl-L-methionine site. The segment covering 348–358 (TRSDAHQASTT) has biased composition (polar residues). A disordered region spans residues 348–367 (TRSDAHQASTTAPPPPGLTG).

This sequence belongs to the UPF0677 family.

In terms of biological role, exhibits S-adenosyl-L-methionine-dependent methyltransferase activity. The chain is Putative S-adenosyl-L-methionine-dependent methyltransferase MT0751 from Mycobacterium tuberculosis (strain CDC 1551 / Oshkosh).